The sequence spans 186 residues: Adenylate kinase (186 aa).

Residue 14 to 19 (GAGKGT) coordinates ATP. The segment at 34–63 (STGDILRDHVARGTPLGERVRPIMERGDLV) is NMP. AMP contacts are provided by residues Thr-35, Arg-40, 61-63 (DLV), 84-87 (GFPR), and Gln-91. The interval 125–135 (RRAELEGRSDD) is LID. ATP is bound at residue Arg-126. 2 residues coordinate AMP: Arg-132 and Arg-143. Residue Gly-171 participates in ATP binding.

Belongs to the adenylate kinase family. Monomer.

It localises to the cytoplasm. It carries out the reaction AMP + ATP = 2 ADP. Its pathway is purine metabolism; AMP biosynthesis via salvage pathway; AMP from ADP: step 1/1. Its function is as follows. Catalyzes the reversible transfer of the terminal phosphate group between ATP and AMP. Plays an important role in cellular energy homeostasis and in adenine nucleotide metabolism. This chain is Adenylate kinase, found in Thermus thermophilus (strain ATCC BAA-163 / DSM 7039 / HB27).